The primary structure comprises 312 residues: tRNA U34 carboxymethyltransferase (312 aa).

Carboxy-S-adenosyl-L-methionine is bound by residues lysine 88, tryptophan 102, lysine 107, glycine 127, 149-151 (DPS), 177-178 (LD), methionine 191, tyrosine 195, and arginine 304.

It belongs to the class I-like SAM-binding methyltransferase superfamily. CmoB family. In terms of assembly, homotetramer.

The enzyme catalyses carboxy-S-adenosyl-L-methionine + 5-hydroxyuridine(34) in tRNA = 5-carboxymethoxyuridine(34) in tRNA + S-adenosyl-L-homocysteine + H(+). In terms of biological role, catalyzes carboxymethyl transfer from carboxy-S-adenosyl-L-methionine (Cx-SAM) to 5-hydroxyuridine (ho5U) to form 5-carboxymethoxyuridine (cmo5U) at position 34 in tRNAs. The protein is tRNA U34 carboxymethyltransferase of Dichelobacter nodosus (strain VCS1703A).